We begin with the raw amino-acid sequence, 102 residues long: Large ribosomal subunit protein bL21 (102 aa).

It belongs to the bacterial ribosomal protein bL21 family. In terms of assembly, part of the 50S ribosomal subunit. Contacts protein L20.

Functionally, this protein binds to 23S rRNA in the presence of protein L20. This is Large ribosomal subunit protein bL21 from Nocardioides sp. (strain ATCC BAA-499 / JS614).